Here is a 454-residue protein sequence, read N- to C-terminus: tRNA modification GTPase MnmE (454 aa).

The (6S)-5-formyl-5,6,7,8-tetrahydrofolate site is built by R23, E80, and K120. The region spanning 216-377 (GMKVVIAGRP…LRNHLKQSMG (162 aa)) is the TrmE-type G domain. A K(+)-binding site is contributed by N226. Residues 226 to 231 (NAGKSS), 245 to 251 (TDIAGTT), 270 to 273 (DTAG), 335 to 338 (NKAD), and 358 to 360 (SAR) each bind GTP. A Mg(2+)-binding site is contributed by S230. Residues T245, I247, and T250 each coordinate K(+). T251 is a Mg(2+) binding site. K454 lines the (6S)-5-formyl-5,6,7,8-tetrahydrofolate pocket.

Belongs to the TRAFAC class TrmE-Era-EngA-EngB-Septin-like GTPase superfamily. TrmE GTPase family. Homodimer. Heterotetramer of two MnmE and two MnmG subunits. K(+) serves as cofactor.

The protein resides in the cytoplasm. Functionally, exhibits a very high intrinsic GTPase hydrolysis rate. Involved in the addition of a carboxymethylaminomethyl (cmnm) group at the wobble position (U34) of certain tRNAs, forming tRNA-cmnm(5)s(2)U34. This is tRNA modification GTPase MnmE from Escherichia coli O127:H6 (strain E2348/69 / EPEC).